Consider the following 120-residue polypeptide: Glycine cleavage system H protein (120 aa).

In terms of domain architecture, Lipoyl-binding spans 17 to 99; the sequence is IATVGITSHA…QGAGWFFKLK (83 aa). At K58 the chain carries N6-lipoyllysine.

Belongs to the GcvH family. The glycine cleavage system is composed of four proteins: P, T, L and H. (R)-lipoate is required as a cofactor.

Functionally, the glycine cleavage system catalyzes the degradation of glycine. The H protein shuttles the methylamine group of glycine from the P protein to the T protein. The polypeptide is Glycine cleavage system H protein (Agrobacterium fabrum (strain C58 / ATCC 33970) (Agrobacterium tumefaciens (strain C58))).